The chain runs to 202 residues: Homeobox protein ceh-13 (202 aa).

2 disordered regions span residues 60 to 83 (PATA…LPTG) and 166 to 202 (RMKE…KNFK). Residues 63 to 81 (ASGLSPPASRSSNSSAELP) show a composition bias toward low complexity. The segment at residues 114–173 (NGTNRTNFTTHQLTELEKEFHTAKYVNRTRRTEIASNLKLQEAQVKIWFQNRRMKEKKRE) is a DNA-binding region (homeobox). The span at 183 to 194 (TWESNSPTSSCS) shows a compositional bias: polar residues.

Its subcellular location is the nucleus. The sequence is that of Homeobox protein ceh-13 (ceh-13) from Caenorhabditis elegans.